The primary structure comprises 290 residues: 33 kDa chaperonin (290 aa).

2 disulfide bridges follow: Cys231/Cys233 and Cys264/Cys267.

Belongs to the HSP33 family. Post-translationally, under oxidizing conditions two disulfide bonds are formed involving the reactive cysteines. Under reducing conditions zinc is bound to the reactive cysteines and the protein is inactive.

Its subcellular location is the cytoplasm. Functionally, redox regulated molecular chaperone. Protects both thermally unfolding and oxidatively damaged proteins from irreversible aggregation. Plays an important role in the bacterial defense system toward oxidative stress. The chain is 33 kDa chaperonin from Photorhabdus laumondii subsp. laumondii (strain DSM 15139 / CIP 105565 / TT01) (Photorhabdus luminescens subsp. laumondii).